The following is a 356-amino-acid chain: Histidinol-phosphate aminotransferase 1 (356 aa).

At lysine 213 the chain carries N6-(pyridoxal phosphate)lysine.

The protein belongs to the class-II pyridoxal-phosphate-dependent aminotransferase family. Histidinol-phosphate aminotransferase subfamily. In terms of assembly, homodimer. Pyridoxal 5'-phosphate serves as cofactor.

The enzyme catalyses L-histidinol phosphate + 2-oxoglutarate = 3-(imidazol-4-yl)-2-oxopropyl phosphate + L-glutamate. It participates in amino-acid biosynthesis; L-histidine biosynthesis; L-histidine from 5-phospho-alpha-D-ribose 1-diphosphate: step 7/9. In Burkholderia pseudomallei (strain K96243), this protein is Histidinol-phosphate aminotransferase 1.